The primary structure comprises 1038 residues: Isoleucine--tRNA ligase (1038 aa).

The 'HIGH' region motif lies at 47 to 57 (PFATGLPHYGH). Residues 591–595 (KMSKR) carry the 'KMSKS' region motif. Lysine 594 contacts ATP.

Belongs to the class-I aminoacyl-tRNA synthetase family. IleS type 2 subfamily. In terms of assembly, monomer. The cofactor is Zn(2+).

Its subcellular location is the cytoplasm. The catalysed reaction is tRNA(Ile) + L-isoleucine + ATP = L-isoleucyl-tRNA(Ile) + AMP + diphosphate. Catalyzes the attachment of isoleucine to tRNA(Ile). As IleRS can inadvertently accommodate and process structurally similar amino acids such as valine, to avoid such errors it has two additional distinct tRNA(Ile)-dependent editing activities. One activity is designated as 'pretransfer' editing and involves the hydrolysis of activated Val-AMP. The other activity is designated 'posttransfer' editing and involves deacylation of mischarged Val-tRNA(Ile). The polypeptide is Isoleucine--tRNA ligase (Protochlamydia amoebophila (strain UWE25)).